Reading from the N-terminus, the 423-residue chain is Putative protein phosphatase 2C 50 (423 aa).

The PPM-type phosphatase domain occupies isoleucine 52–leucine 380. 4 residues coordinate Mn(2+): aspartate 74, glycine 75, aspartate 320, and aspartate 371.

It belongs to the PP2C family. Mg(2+) serves as cofactor. It depends on Mn(2+) as a cofactor.

It catalyses the reaction O-phospho-L-seryl-[protein] + H2O = L-seryl-[protein] + phosphate. The enzyme catalyses O-phospho-L-threonyl-[protein] + H2O = L-threonyl-[protein] + phosphate. The chain is Putative protein phosphatase 2C 50 from Arabidopsis thaliana (Mouse-ear cress).